Reading from the N-terminus, the 354-residue chain is Sorbitol dehydrogenase (354 aa).

A Zn(2+)-binding site is contributed by cysteine 43. Residue tyrosine 49 coordinates substrate. Zn(2+) is bound by residues histidine 67 and glutamate 68. Glutamate 153 is a binding site for substrate. NAD(+) contacts are provided by isoleucine 181, aspartate 201, and arginine 206. Serine 208 and serine 222 each carry phosphoserine. Residues 270–272 and 294–296 contribute to the NAD(+) site; these read VGL and VFR. Positions 296 and 297 each coordinate substrate.

The protein belongs to the zinc-containing alcohol dehydrogenase family. Homotetramer. The cofactor is Zn(2+). Expressed in liver.

The protein localises to the mitochondrion membrane. It is found in the cell projection. Its subcellular location is the cilium. The protein resides in the flagellum. It catalyses the reaction xylitol + NAD(+) = D-xylulose + NADH + H(+). The catalysed reaction is L-iditol + NAD(+) = keto-L-sorbose + NADH + H(+). The enzyme catalyses keto-D-fructose + NADH + H(+) = D-sorbitol + NAD(+). Polyol dehydrogenase that catalyzes the reversible NAD(+)-dependent oxidation of various sugar alcohols. Is mostly active with xylitol, L-iditol and D-sorbitol (D-glucitol) as substrates, leading to the C2-oxidized products D-xylulose, L-sorbose and D-fructose, respectively. Is a key enzyme in the polyol pathway that interconverts glucose and fructose via sorbitol, which constitutes an important alternate route for glucose metabolism. May play a role in sperm motility by using sorbitol as an alternative energy source for sperm motility. The polypeptide is Sorbitol dehydrogenase (SORD) (Ovis aries (Sheep)).